The primary structure comprises 579 residues: Thiol:disulfide interchange protein DsbD (579 aa).

The N-terminal stretch at 1–16 is a signal peptide; that stretch reads MKKLFLFFTLIFTAFA. 2 disulfides stabilise this stretch: Cys124/Cys129 and Cys193/Cys315. 8 helical membrane-spanning segments follow: residues 178–198, 230–250, 254–274, 296–316, 337–357, 376–396, 397–417, and 420–440; these read IFGF…LPML, LTYT…QIAL, YVMI…FGLF, GAFG…SPCT, AATL…ITLF, FGFV…PEVW, EPRL…LQMS, and GFGY…VQPL. The 131-residue stretch at 449–579 folds into the Thioredoxin domain; it reads TTTQSAVENK…AFSNWLKALH (131 aa). An intrachain disulfide couples Cys495 to Cys498.

Belongs to the thioredoxin family. DsbD subfamily.

The protein resides in the cell inner membrane. The catalysed reaction is [protein]-dithiol + NAD(+) = [protein]-disulfide + NADH + H(+). The enzyme catalyses [protein]-dithiol + NADP(+) = [protein]-disulfide + NADPH + H(+). Required to facilitate the formation of correct disulfide bonds in some periplasmic proteins and for the assembly of the periplasmic c-type cytochromes. Acts by transferring electrons from cytoplasmic thioredoxin to the periplasm. This transfer involves a cascade of disulfide bond formation and reduction steps. This is Thiol:disulfide interchange protein DsbD from Haemophilus influenzae (strain PittEE).